The primary structure comprises 462 residues: Centrosomal protein of 55 kDa (462 aa).

Residues 1–11 are compositionally biased toward basic and acidic residues; that stretch reads MSSRSPKDLIK. The disordered stretch occupies residues 1 to 26; that stretch reads MSSRSPKDLIKSKWGSRPSSSKSDTA. Positions 12 to 23 are enriched in low complexity; sequence SKWGSRPSSSKS. A coiled-coil region spans residues 50–400; that stretch reads KMAEKGRSRL…TQLESLKQLH (351 aa). Serine 96 and serine 99 each carry phosphoserine. The interval 157-235 is interaction with TSG101; sequence ANCFNSSMNS…EGYLQVEKQK (79 aa). The interaction with PDCD6IP stretch occupies residues 160 to 214; that stretch reads FNSSMNSIHEKEMQLKDALEKNQQWLVYDQQREAYVKGLLAKIFELEKRTETAAA. A required for localization to the interphase centrosome and to the midbody during cytokinesis region spans residues 354 to 462; the sequence is QMQACTLDFE…LLVHVEYCMK (109 aa). Residues 410-430 are disordered; sequence PLQREPESRVKATSPKSPSAA. Serine 423, serine 426, and serine 428 each carry phosphoserine. Serine 434 is modified (phosphoserine; by PLK1).

As to quaternary structure, homodimer. Interacts (phosphorylated on Ser-423 and Ser-426) with PLK1; the interaction is indirect via the MTMR3:MTMR4 heterooligomer, occurs during early mitosis, regulates the phosphorylation of CEP55 by PLK1 and its recruitment to the midbody where it can mediate cell abscission. Interacts with AKAP9/CG-NAP; the interaction occurs in interphase and is lost upon mitotic entry. Interacts with PCNT/Kendrin; the interaction occurs in interphase and is lost upon mitotic entry. Directly interacts with PDCD6IP; this interaction is required for PDCD6IP targeting to the midbody; CEP55 binds PDCD6IP in a 2:1 stoichiometry; PDCD6IP competes with TSG101 for the same binding site. Interacts with TSG101; TSG101 competes with PDCD6IP for the same binding site; interaction is required for cytokinesis. Interacts with MVB12A, VPS37B, VPS37C and VPS28. In terms of processing, there is a hierachy of phosphorylation, where both Ser-423 and Ser-426 are phosphorylated at the onset of mitosis, prior to Ser-434. Phosphorylation at Ser-423 and Ser-426 is required for dissociation from the centrosome at the G2/M boundary. Phosphorylation at the 3 sites, Ser-423, Ser-426 and Ser-434, is required for protein function at the final stages of cell division to complete cytokinesis successfully.

The protein localises to the cytoplasm. Its subcellular location is the cytoskeleton. The protein resides in the microtubule organizing center. It localises to the centrosome. It is found in the centriole. The protein localises to the cleavage furrow. Its subcellular location is the midbody. The protein resides in the midbody ring. Functionally, plays a role in mitotic exit and cytokinesis. Recruits PDCD6IP and TSG101 to midbody during cytokinesis. Required for successful completion of cytokinesis. Not required for microtubule nucleation. Plays a role in the development of the brain and kidney. This is Centrosomal protein of 55 kDa from Mus musculus (Mouse).